Here is a 307-residue protein sequence, read N- to C-terminus: MGQHNLTVLTEFILMELTRRPELQIPLFGVFLVIYLITVVGNLTMIILTKLDSHLHTPMYFSIRHLAFVDLGNSTVICPKVLANFVVDRNTISYYACAAQLAFFLMFIISEFFILSAMAYDRYVAICNPLLYYVIMSQRLCHVLVGIQYLYSTFQALMFTIKIFTLTFCGSNVISHFYCDDVPLLPMLCSNAQEIELLSILFSVFNLISSFLIVLVSYMLILLAICQMHSAEGRKKAFSTCGSHLTVVVVFYGSLLFMYMQPNSTHFFDTDKMASVFYTLVIPMLNPLIYSLRNEEVKNAFYKLFEN.

Topologically, residues 1–25 are extracellular; sequence MGQHNLTVLTEFILMELTRRPELQI. Asn-5 is a glycosylation site (N-linked (GlcNAc...) asparagine). The chain crosses the membrane as a helical span at residues 26 to 46; sequence PLFGVFLVIYLITVVGNLTMI. The Cytoplasmic segment spans residues 47–54; that stretch reads ILTKLDSH. The helical transmembrane segment at 55 to 75 threads the bilayer; sequence LHTPMYFSIRHLAFVDLGNST. The Extracellular portion of the chain corresponds to 76–99; it reads VICPKVLANFVVDRNTISYYACAA. Cys-97 and Cys-189 are oxidised to a cystine. The helical transmembrane segment at 100–120 threads the bilayer; it reads QLAFFLMFIISEFFILSAMAY. Residues 121–139 lie on the Cytoplasmic side of the membrane; sequence DRYVAICNPLLYYVIMSQR. The helical transmembrane segment at 140–160 threads the bilayer; sequence LCHVLVGIQYLYSTFQALMFT. At 161 to 197 the chain is on the extracellular side; that stretch reads IKIFTLTFCGSNVISHFYCDDVPLLPMLCSNAQEIEL. The chain crosses the membrane as a helical span at residues 198 to 217; that stretch reads LSILFSVFNLISSFLIVLVS. Residues 218–237 lie on the Cytoplasmic side of the membrane; it reads YMLILLAICQMHSAEGRKKA. Residues 238–258 form a helical membrane-spanning segment; sequence FSTCGSHLTVVVVFYGSLLFM. Topologically, residues 259 to 271 are extracellular; sequence YMQPNSTHFFDTD. N-linked (GlcNAc...) asparagine glycosylation occurs at Asn-263. The helical transmembrane segment at 272-292 threads the bilayer; it reads KMASVFYTLVIPMLNPLIYSL. The Cytoplasmic portion of the chain corresponds to 293 to 307; the sequence is RNEEVKNAFYKLFEN.

The protein belongs to the G-protein coupled receptor 1 family.

Its subcellular location is the cell membrane. Functionally, odorant receptor. This chain is Olfactory receptor 8K5 (OR8K5), found in Homo sapiens (Human).